The following is a 44-amino-acid chain: uncharacterized protein (44 aa).

This is an uncharacterized protein from His1 virus (isolate Australia/Victoria) (His1V).